The sequence spans 94 residues: Acylphosphatase (94 aa).

Residues 8–94 enclose the Acylphosphatase-like domain; the sequence is TLFIIVHGKV…GRRFKHFAQH (87 aa). Active-site residues include Arg-23 and Asn-41. The tract at residues 69–94 is disordered; sequence PPAASVTELESRREDGGRRFKHFAQH. Residues 77-86 are compositionally biased toward basic and acidic residues; it reads LESRREDGGR.

This sequence belongs to the acylphosphatase family.

It catalyses the reaction an acyl phosphate + H2O = a carboxylate + phosphate + H(+). The sequence is that of Acylphosphatase (acyP) from Bordetella avium (strain 197N).